The following is a 307-amino-acid chain: ATP synthase gamma chain (307 aa).

It belongs to the ATPase gamma chain family. In terms of assembly, F-type ATPases have 2 components, CF(1) - the catalytic core - and CF(0) - the membrane proton channel. CF(1) has five subunits: alpha(3), beta(3), gamma(1), delta(1), epsilon(1). CF(0) has three main subunits: a, b and c.

Its subcellular location is the cell membrane. Functionally, produces ATP from ADP in the presence of a proton gradient across the membrane. The gamma chain is believed to be important in regulating ATPase activity and the flow of protons through the CF(0) complex. This Bifidobacterium longum (strain DJO10A) protein is ATP synthase gamma chain.